A 473-amino-acid polypeptide reads, in one-letter code: Arginine biosynthesis bifunctional protein ArgJ, mitochondrial (473 aa).

Positions 201, 230, 241, 328, 468, and 473 each coordinate substrate. The active-site Nucleophile is T241.

This sequence belongs to the ArgJ family. Heterodimer of an alpha and a beta chain. Post-translationally, the alpha and beta chains are autoproteolytically processed from a single precursor protein within the mitochondrion.

It is found in the mitochondrion matrix. The enzyme catalyses N(2)-acetyl-L-ornithine + L-glutamate = N-acetyl-L-glutamate + L-ornithine. The catalysed reaction is L-glutamate + acetyl-CoA = N-acetyl-L-glutamate + CoA + H(+). It functions in the pathway amino-acid biosynthesis; L-arginine biosynthesis; L-ornithine and N-acetyl-L-glutamate from L-glutamate and N(2)-acetyl-L-ornithine (cyclic): step 1/1. The protein operates within amino-acid biosynthesis; L-arginine biosynthesis; N(2)-acetyl-L-ornithine from L-glutamate: step 1/4. Functionally, catalyzes two activities which are involved in the cyclic version of arginine biosynthesis: the synthesis of acetylglutamate from glutamate and acetyl-CoA, and of ornithine by transacetylation between acetylornithine and glutamate. The protein is Arginine biosynthesis bifunctional protein ArgJ, mitochondrial of Ajellomyces capsulatus (strain G186AR / H82 / ATCC MYA-2454 / RMSCC 2432) (Darling's disease fungus).